The primary structure comprises 24 residues: Cryptonin (24 aa).

Antimicrobial peptide, active against the Gram-negative bacterium E.coli K12-594 (MIC=3.12 ug/ml), the Gram-positive bacteria B.subtilis KCTC 3086 (MIC=3.12 ug/ml), S.aureus KCTC 1928 (MIC=25 ug/ml) and M.luteus KCTC 3063 (MIC=1.56 ug/ml), the antibiotic resistant bacteria methicillin-resistant S.aureus (MRSA) (MIC=25 ug/ml) and vancomycin-resistant Enterococci (VRE) (MIC=25 ug/ml), and the fungi C.albicans KCTC 7965 (MIC=50 ug/ml) and C.tropicalis KCTC 1925 (MIC=3.12 ug/ml). Has very low hemolytic activity on rat erythrocytes. The polypeptide is Cryptonin (Cryptotympana dubia (Korean horse cicada)).